Here is a 413-residue protein sequence, read N- to C-terminus: Divalent metal cation transporter MntH (413 aa).

The Cytoplasmic segment spans residues 1–19 (MTDNRVENSSGRAARKLRL). A helical transmembrane segment spans residues 20–39 (ALMGPAFIAAIGYIDPGNFA). Residues 40-51 (TNIQAGASFGYQ) lie on the Periplasmic side of the membrane. The chain crosses the membrane as a helical span at residues 52 to 71 (LLWVVVWANLMAMLIQILSA). The Cytoplasmic segment spans residues 72–95 (KLGIATGKNLAEQIRDHYPRPVVW). The helical transmembrane segment at 96-118 (FYWVQAEIIAMATDLAEFIGAAI) threads the bilayer. Over 119 to 125 (GFKLILG) the chain is Periplasmic. The chain crosses the membrane as a helical span at residues 126–145 (VSLLQGAVLTGIATFLILML). Residues 146–155 (QRRGQKPLEK) are Cytoplasmic-facing. Residues 156 to 175 (VIGGLLLFVAAAYIVELFFS) form a helical membrane-spanning segment. Topologically, residues 176-196 (QPDMAQLGKGMVIPALPNPEA) are periplasmic. Residues 197–220 (VFLAAGVLGATIMPHVIYLHSSLT) form a helical membrane-spanning segment. The Cytoplasmic portion of the chain corresponds to 221–238 (QHLHGGTRQQRYSATKWD). A helical transmembrane segment spans residues 239–258 (VAIAMTIAGFVNLAMMATAA). Over 259–276 (AAFHFSGHTGIADLDQAY) the chain is Periplasmic. The chain crosses the membrane as a helical span at residues 277–297 (LTLEPLLSHAAATVFGLSLVA). The Cytoplasmic segment spans residues 298–327 (AGLSSTVVGTLAGQVVMQGFVRFHIPLWVR). The chain crosses the membrane as a helical span at residues 328-344 (RSITMLPSFIVILMGLD). Over 345–350 (PTRILV) the chain is Periplasmic. Residues 351-370 (MSQVLLSFGIALALVPLLIF) traverse the membrane as a helical segment. The Cytoplasmic segment spans residues 371–387 (TSNATLMGELVNTRRVK). The helical transmembrane segment at 388 to 406 (QIGWIIVVLVVALNIWLLV) threads the bilayer. Residues 407 to 413 (GTVMGLS) are Periplasmic-facing.

Belongs to the NRAMP family.

The protein resides in the cell inner membrane. H(+)-stimulated, divalent metal cation uptake system. This is Divalent metal cation transporter MntH from Salmonella gallinarum (strain 287/91 / NCTC 13346).